The primary structure comprises 156 residues: RNA polymerase sigma factor SigS (156 aa).

The Polymerase core binding motif lies at 29 to 44 (EYYQLLLIKMWQLSQI). Residues 126–145 (QFEIAEIMSLSLSTIKLIKM) constitute a DNA-binding region (H-T-H motif).

It belongs to the sigma-70 factor family.

In terms of biological role, sigma factors are initiation factors that promote the attachment of RNA polymerase to specific initiation sites and are then released. Sigma-S contributes to the protection against external stress, thus playing a role in cellular fitness and survival. This is RNA polymerase sigma factor SigS (sigS) from Staphylococcus aureus (strain Mu50 / ATCC 700699).